Consider the following 298-residue polypeptide: N-acetylmuramic acid 6-phosphate etherase (298 aa).

Residues 55 to 218 (IHAQVSGGGR…STGLMIKSGK (164 aa)) enclose the SIS domain. The Proton donor role is filled by Glu-83. Residue Glu-114 is part of the active site.

This sequence belongs to the GCKR-like family. MurNAc-6-P etherase subfamily. Homodimer.

The enzyme catalyses N-acetyl-D-muramate 6-phosphate + H2O = N-acetyl-D-glucosamine 6-phosphate + (R)-lactate. It functions in the pathway amino-sugar metabolism; 1,6-anhydro-N-acetylmuramate degradation. Its pathway is amino-sugar metabolism; N-acetylmuramate degradation. It participates in cell wall biogenesis; peptidoglycan recycling. Its function is as follows. Specifically catalyzes the cleavage of the D-lactyl ether substituent of MurNAc 6-phosphate, producing GlcNAc 6-phosphate and D-lactate. Together with AnmK, is also required for the utilization of anhydro-N-acetylmuramic acid (anhMurNAc) either imported from the medium or derived from its own cell wall murein, and thus plays a role in cell wall recycling. This Shigella flexneri serotype 5b (strain 8401) protein is N-acetylmuramic acid 6-phosphate etherase.